Here is an 886-residue protein sequence, read N- to C-terminus: Linoleate 9S-lipoxygenase 5 (886 aa).

The PLAT domain maps to 35-180; it reads IEGEVVVMKK…RYRSDRVFFS (146 aa). The Lipoxygenase domain maps to 183 to 886; sequence AYLPSETPEL…GKGIPNSVSI (704 aa). The tract at residues 234–266 is disordered; the sequence is GPDSVRPVLGGSPELPYPRRGKTGRKSTKSDPK. 5 residues coordinate Fe cation: His-542, His-547, His-733, Asn-737, and Ile-886.

Belongs to the lipoxygenase family. Requires Fe cation as cofactor. In terms of tissue distribution, expressed in roots.

The enzyme catalyses (9Z,12Z)-octadecadienoate + O2 = (9S)-hydroperoxy-(10E,12Z)-octadecadienoate. It carries out the reaction (9Z,12Z,15Z)-octadecatrienoate + O2 = (9S)-hydroperoxy-(10E,12Z,15Z)-octadecatrienoate. It functions in the pathway lipid metabolism; oxylipin biosynthesis. Functionally, 9S-lipoxygenase that can use linoleic acid or linolenic acid as substrates. Plant lipoxygenases may be involved in a number of diverse aspects of plant physiology including growth and development, pest resistance, and senescence or responses to wounding. Catalyzes the hydroperoxidation of lipids containing a cis,cis-1,4-pentadiene structure. Function as regulators of root development by controlling the emergence of lateral roots. 9S-lypoxygenase-derived oxylipins may play an antagonistic role to ethylene signaling in the control of responses involving oxidative stress, lipid peroxidation and plant defense. LOX5-derived oxylipins may facilitate performance of green peach aphid (Myzus persicae) on foliage. 9S-lypoxygenase-derived oxylipins are engaged during infection to control the balance between salicylic acid (SA) and jasmonate (JA) signaling to facilitate infection by the fungal pathogen Fusarium graminearum. 9S-lypoxygenase-derived oxylipins activate brassinosteroid signaling to promote cell wall-based defense and limit pathogen infection. Does not seem to contribute to the oxidation of free fatty acids during seed aging. In Arabidopsis thaliana (Mouse-ear cress), this protein is Linoleate 9S-lipoxygenase 5.